The following is a 420-amino-acid chain: 3-isopropylmalate dehydratase large subunit (420 aa).

Residues Cys-300, Cys-360, and Cys-363 each coordinate [4Fe-4S] cluster.

It belongs to the aconitase/IPM isomerase family. LeuC type 2 subfamily. Heterodimer of LeuC and LeuD. [4Fe-4S] cluster serves as cofactor.

The catalysed reaction is (2R,3S)-3-isopropylmalate = (2S)-2-isopropylmalate. The protein operates within amino-acid biosynthesis; L-leucine biosynthesis; L-leucine from 3-methyl-2-oxobutanoate: step 2/4. Its function is as follows. Catalyzes the isomerization between 2-isopropylmalate and 3-isopropylmalate, via the formation of 2-isopropylmaleate. The chain is 3-isopropylmalate dehydratase large subunit from Helicobacter hepaticus (strain ATCC 51449 / 3B1).